A 990-amino-acid chain; its full sequence is Glycine dehydrogenase (decarboxylating) (990 aa).

Lys726 is subject to N6-(pyridoxal phosphate)lysine.

This sequence belongs to the GcvP family. The glycine cleavage system is composed of four proteins: P, T, L and H. Pyridoxal 5'-phosphate is required as a cofactor.

The enzyme catalyses N(6)-[(R)-lipoyl]-L-lysyl-[glycine-cleavage complex H protein] + glycine + H(+) = N(6)-[(R)-S(8)-aminomethyldihydrolipoyl]-L-lysyl-[glycine-cleavage complex H protein] + CO2. Its function is as follows. The glycine cleavage system catalyzes the degradation of glycine. The P protein binds the alpha-amino group of glycine through its pyridoxal phosphate cofactor; CO(2) is released and the remaining methylamine moiety is then transferred to the lipoamide cofactor of the H protein. The chain is Glycine dehydrogenase (decarboxylating) from Rhodopseudomonas palustris (strain ATCC BAA-98 / CGA009).